A 599-amino-acid polypeptide reads, in one-letter code: Elongation factor 4 (599 aa).

Positions 4–186 (SKIRNFSIIA…SIVEKVPAPK (183 aa)) constitute a tr-type G domain. GTP contacts are provided by residues 16–21 (DHGKST) and 133–136 (NKVD).

The protein belongs to the TRAFAC class translation factor GTPase superfamily. Classic translation factor GTPase family. LepA subfamily.

The protein localises to the cell inner membrane. The enzyme catalyses GTP + H2O = GDP + phosphate + H(+). In terms of biological role, required for accurate and efficient protein synthesis under certain stress conditions. May act as a fidelity factor of the translation reaction, by catalyzing a one-codon backward translocation of tRNAs on improperly translocated ribosomes. Back-translocation proceeds from a post-translocation (POST) complex to a pre-translocation (PRE) complex, thus giving elongation factor G a second chance to translocate the tRNAs correctly. Binds to ribosomes in a GTP-dependent manner. This is Elongation factor 4 from Syntrophotalea carbinolica (strain DSM 2380 / NBRC 103641 / GraBd1) (Pelobacter carbinolicus).